The following is a 582-amino-acid chain: Kelch-like protein diablo (582 aa).

The disordered stretch occupies residues 1–22 (MGDVLISDRPPSPARLSHTSEK). The region spanning 41–108 (CDVVINVSGR…CYTSHIVVEE (68 aa)) is the BTB domain. The region spanning 143–245 (CLGIRAFADT…SPKFLVGTVG (103 aa)) is the BACK domain. 6 Kelch repeats span residues 292–338 (VLFA…VLND), 340–386 (LYAV…VLDG), 387–433 (FLYA…VLGG), 435–480 (LYAI…VFNN), 482–527 (IYAV…VVNG), and 528–574 (QLYA…VMRA).

The protein operates within protein modification; protein ubiquitination. Functionally, probable substrate-specific adapter of an E3 ubiquitin-protein ligase complex which mediates the ubiquitination and subsequent proteasomal degradation of target proteins. May have a role in synapse differentiation and growth. The chain is Kelch-like protein diablo from Culex quinquefasciatus (Southern house mosquito).